The chain runs to 275 residues: Large ribosomal subunit protein uL2 (275 aa).

Disordered stretches follow at residues 24-47 (IHKG…NHHG) and 227-261 (PVDH…KTRK).

The protein belongs to the universal ribosomal protein uL2 family. Part of the 50S ribosomal subunit. Forms a bridge to the 30S subunit in the 70S ribosome.

One of the primary rRNA binding proteins. Required for association of the 30S and 50S subunits to form the 70S ribosome, for tRNA binding and peptide bond formation. It has been suggested to have peptidyltransferase activity; this is somewhat controversial. Makes several contacts with the 16S rRNA in the 70S ribosome. This is Large ribosomal subunit protein uL2 from Xylella fastidiosa (strain M12).